The following is a 461-amino-acid chain: Adenosylmethionine-8-amino-7-oxononanoate aminotransferase (461 aa).

Residue 117–118 coordinates pyridoxal 5'-phosphate; it reads GA. Tyr150 is a substrate binding site. Asp263 lines the pyridoxal 5'-phosphate pocket. 3 residues coordinate substrate: Lys296, Gly331, and Arg426. At Lys296 the chain carries N6-(pyridoxal phosphate)lysine.

It belongs to the class-III pyridoxal-phosphate-dependent aminotransferase family. BioA subfamily. In terms of assembly, homodimer. Pyridoxal 5'-phosphate is required as a cofactor.

The protein resides in the cytoplasm. It catalyses the reaction (8S)-8-amino-7-oxononanoate + S-adenosyl-L-methionine = S-adenosyl-4-methylsulfanyl-2-oxobutanoate + (7R,8S)-7,8-diammoniononanoate. Its pathway is cofactor biosynthesis; biotin biosynthesis; 7,8-diaminononanoate from 8-amino-7-oxononanoate (SAM route): step 1/1. Functionally, catalyzes the transfer of the alpha-amino group from S-adenosyl-L-methionine (SAM) to 7-keto-8-aminopelargonic acid (KAPA) to form 7,8-diaminopelargonic acid (DAPA). It is the only aminotransferase known to utilize SAM as an amino donor. In Methanocaldococcus jannaschii (strain ATCC 43067 / DSM 2661 / JAL-1 / JCM 10045 / NBRC 100440) (Methanococcus jannaschii), this protein is Adenosylmethionine-8-amino-7-oxononanoate aminotransferase.